The sequence spans 358 residues: DNA methyltransferase CcrM (358 aa).

The methyltransferase stretch occupies residues 1–260 (MKFGPETIIH…AKVVPIAPED (260 aa)). DNA-binding regions (target strand DNA) lie at residues 31-34 (DPPY) and 39-45 (GGDLLRP). 2 DNA-binding regions (non-target strand DNA) span residues 93–94 (YH) and 109–110 (WI). His-94 is a binding site for dsDNA. A DNA-binding region (target strand DNA) is located at residues 122 to 132 (MPNFKGTRFAN). Residues 153–157 (YDALK) constitute a DNA-binding region (non-target strand DNA). Gln-164 and Arg-179 together coordinate dsDNA. The target strand DNA DNA-binding region spans 187 to 193 (KAHPTQK). Residues 259 to 355 (EDLDVMGSKR…IDVLRAQVRA (97 aa)) form the RAMA domain. Residues 261-270 (LDVMGSKRAE) are linker. Positions 267 and 272 each coordinate dsDNA. The segment at 272–358 (RVPFGTIVEA…LRAQVRAGMN (87 aa)) is non-specific DNA-binding. DNA-binding regions (non-target strand DNA) lie at residues 315–317 (SIH) and 330–332 (NGW). Residue Arg-350 coordinates dsDNA.

It belongs to the N(4)/N(6)-methyltransferase family. As to quaternary structure, homodimer. In terms of processing, rapidly degraded by Lon protease prior to cell division.

The catalysed reaction is a 2'-deoxyadenosine in DNA + S-adenosyl-L-methionine = an N(6)-methyl-2'-deoxyadenosine in DNA + S-adenosyl-L-homocysteine + H(+). Its function is as follows. A beta subtype methylase that recognizes the double-stranded sequence 5'-GANTC-3' and methylates non-modifed A-2 on the hemimethylated, post-replicative DNA. Opens a bubble in the DNA at the recognition site, allowing precise recognition of the sequence and ensuring enzyme specificity. Functions only in the predivisional cell. Responsible for 5'-GANTC-3' methylation in the cell; methylation of hemimethylated sites generated after replication fork passage occurs late in the predivisional cell, near completion of chromosome replication but prior to cell division. Contributes to the accurate cell-cycle control of DNA replication and cellular morphology. In Caulobacter vibrioides (strain ATCC 19089 / CIP 103742 / CB 15) (Caulobacter crescentus), this protein is DNA methyltransferase CcrM (ccrMIM).